Consider the following 1123-residue polypeptide: Polyprotein of EF-Ts, chloroplastic (1123 aa).

The N-terminal 73 residues, 1-73 (MTPVVHCSVG…SSARRPRTLS (73 aa)), are a transit peptide targeting the chloroplast. The disordered stretch occupies residues 68–141 (RPRTLSAATV…MPPLNDEDLV (74 aa)). Residues 94-103 (TSEESSEDTA) show a composition bias toward acidic residues. Low complexity predominate over residues 106 to 119 (TAEASEQAEASTSS). Positions 143 to 212 (GASFTGKVRS…ETGRISLTMR (70 aa)) constitute an S1 motif 1 domain. A disordered region spans residues 213 to 258 (TGGDYVKPKTETPKAASGGRNTTATTSRGSPRQTRERDEAKSMGET). Residues 231–244 (GRNTTATTSRGSPR) show a composition bias toward polar residues. Residues 245-254 (QTRERDEAKS) show a composition bias toward basic and acidic residues. The 69-residue stretch at 263-331 (GQFLDGVVKN…VRGQVTLTMK (69 aa)) folds into the S1 motif 2 domain. Disordered regions lie at residues 443-670 (KTES…SEKT) and 894-923 (VAAQ…EEKK). The segment covering 486-501 (EGSVTTEPTEAASTEF) has biased composition (polar residues). A compositionally biased stretch (low complexity) spans 551-587 (SVASTESVTAVVEESAPVSSVAIEVPAPEASEASAQE). Over residues 630 to 639 (KPDEPEESLI) the composition is skewed to acidic residues. Composition is skewed to low complexity over residues 657–670 (AAVP…SEKT) and 894–903 (VAAQTAAKAP). Basic and acidic residues predominate over residues 908 to 923 (PKDDKPEETAETEEKK).

Belongs to the EF-Ts family. Component of the chloroplast ribosome 30S and 70S subunits, as well as polysomes. In terms of assembly, component of the chloroplast ribosome 70S subunit, and at low levels, present in polysomes. As to quaternary structure, associates transiently with chloroplast polysomes.

Its subcellular location is the plastid. The protein resides in the chloroplast. Functionally, associates with the EF-Tu.GDP complex and induces the exchange of GDP to GTP. It remains bound to the aminoacyl-tRNA.EF-Tu.GTP complex up to the GTP hydrolysis stage on the ribosome. Its function is as follows. Binds to psbD and psbA 5'-untranslated regions (UTRs) in vitro. This Oryza sativa subsp. indica (Rice) protein is Polyprotein of EF-Ts, chloroplastic.